The chain runs to 227 residues: Cytochrome c oxidase subunit 2 (227 aa).

Over 1 to 14 (MAYPFQLGLQDATS) the chain is Mitochondrial intermembrane. Residues 15–45 (PIMEELMNFHDHTLMIVFLISTLVLYIISLM) traverse the membrane as a helical segment. The Mitochondrial matrix segment spans residues 46–59 (LTTKLTHTSTMDAQ). A helical transmembrane segment spans residues 60-87 (EVETVWTILPAVILIMIALPSLRILYMM). Residues 88–227 (DEINNPVLTV…HFENWSTSMI (140 aa)) are Mitochondrial intermembrane-facing. Cu cation is bound by residues H161, C196, E198, C200, H204, and M207. Mg(2+) is bound at residue E198.

This sequence belongs to the cytochrome c oxidase subunit 2 family. Component of the cytochrome c oxidase (complex IV, CIV), a multisubunit enzyme composed of 14 subunits. The complex is composed of a catalytic core of 3 subunits MT-CO1, MT-CO2 and MT-CO3, encoded in the mitochondrial DNA, and 11 supernumerary subunits COX4I, COX5A, COX5B, COX6A, COX6B, COX6C, COX7A, COX7B, COX7C, COX8 and NDUFA4, which are encoded in the nuclear genome. The complex exists as a monomer or a dimer and forms supercomplexes (SCs) in the inner mitochondrial membrane with NADH-ubiquinone oxidoreductase (complex I, CI) and ubiquinol-cytochrome c oxidoreductase (cytochrome b-c1 complex, complex III, CIII), resulting in different assemblies (supercomplex SCI(1)III(2)IV(1) and megacomplex MCI(2)III(2)IV(2)). Found in a complex with TMEM177, COA6, COX18, COX20, SCO1 and SCO2. Interacts with TMEM177 in a COX20-dependent manner. Interacts with COX20. Interacts with COX16. Requires Cu cation as cofactor.

It localises to the mitochondrion inner membrane. The catalysed reaction is 4 Fe(II)-[cytochrome c] + O2 + 8 H(+)(in) = 4 Fe(III)-[cytochrome c] + 2 H2O + 4 H(+)(out). Component of the cytochrome c oxidase, the last enzyme in the mitochondrial electron transport chain which drives oxidative phosphorylation. The respiratory chain contains 3 multisubunit complexes succinate dehydrogenase (complex II, CII), ubiquinol-cytochrome c oxidoreductase (cytochrome b-c1 complex, complex III, CIII) and cytochrome c oxidase (complex IV, CIV), that cooperate to transfer electrons derived from NADH and succinate to molecular oxygen, creating an electrochemical gradient over the inner membrane that drives transmembrane transport and the ATP synthase. Cytochrome c oxidase is the component of the respiratory chain that catalyzes the reduction of oxygen to water. Electrons originating from reduced cytochrome c in the intermembrane space (IMS) are transferred via the dinuclear copper A center (CU(A)) of subunit 2 and heme A of subunit 1 to the active site in subunit 1, a binuclear center (BNC) formed by heme A3 and copper B (CU(B)). The BNC reduces molecular oxygen to 2 water molecules using 4 electrons from cytochrome c in the IMS and 4 protons from the mitochondrial matrix. In Apodemus semotus (Taiwan field mouse), this protein is Cytochrome c oxidase subunit 2 (MT-CO2).